Here is a 133-residue protein sequence, read N- to C-terminus: Small ribosomal subunit protein uS8 (133 aa).

This sequence belongs to the universal ribosomal protein uS8 family. As to quaternary structure, part of the 30S ribosomal subunit. Contacts proteins S5 and S12.

Its function is as follows. One of the primary rRNA binding proteins, it binds directly to 16S rRNA central domain where it helps coordinate assembly of the platform of the 30S subunit. This Chlamydia trachomatis serovar A (strain ATCC VR-571B / DSM 19440 / HAR-13) protein is Small ribosomal subunit protein uS8.